The primary structure comprises 367 residues: Queuine tRNA-ribosyltransferase (367 aa).

Asp-92 serves as the catalytic Proton acceptor. Substrate is bound by residues 92-96 (DSGGF), Asp-146, Gln-188, and Gly-215. Positions 246 to 252 (GVGTPKD) are RNA binding. Residue Asp-265 is the Nucleophile of the active site. Residues Cys-303, Cys-305, Cys-308, and His-334 each contribute to the Zn(2+) site.

It belongs to the queuine tRNA-ribosyltransferase family. As to quaternary structure, homodimer. Within each dimer, one monomer is responsible for RNA recognition and catalysis, while the other monomer binds to the replacement base PreQ1. Requires Zn(2+) as cofactor.

The catalysed reaction is 7-aminomethyl-7-carbaguanine + guanosine(34) in tRNA = 7-aminomethyl-7-carbaguanosine(34) in tRNA + guanine. Its pathway is tRNA modification; tRNA-queuosine biosynthesis. Its function is as follows. Catalyzes the base-exchange of a guanine (G) residue with the queuine precursor 7-aminomethyl-7-deazaguanine (PreQ1) at position 34 (anticodon wobble position) in tRNAs with GU(N) anticodons (tRNA-Asp, -Asn, -His and -Tyr). Catalysis occurs through a double-displacement mechanism. The nucleophile active site attacks the C1' of nucleotide 34 to detach the guanine base from the RNA, forming a covalent enzyme-RNA intermediate. The proton acceptor active site deprotonates the incoming PreQ1, allowing a nucleophilic attack on the C1' of the ribose to form the product. After dissociation, two additional enzymatic reactions on the tRNA convert PreQ1 to queuine (Q), resulting in the hypermodified nucleoside queuosine (7-(((4,5-cis-dihydroxy-2-cyclopenten-1-yl)amino)methyl)-7-deazaguanosine). The chain is Queuine tRNA-ribosyltransferase from Francisella tularensis subsp. novicida (strain U112).